A 110-amino-acid polypeptide reads, in one-letter code: Period circadian protein (110 aa).

The tract at residues Val-23–Thr-97 is disordered. 12 tandem repeats follow at residues Gly-30–Thr-31, Gly-33–Thr-34, Gly-36–Thr-37, Gly-38–Thr-39, Gly-40–Thr-41, Gly-42–Thr-43, Gly-44–Thr-45, Gly-46–Thr-47, Gly-48–Thr-49, Gly-50–Thr-51, Gly-52–Thr-53, and Gly-54–Thr-55. Over residues Gly-30–Thr-63 the composition is skewed to gly residues. Positions Gly-30–Thr-79 are 24 X 2 AA approximate tandem repeats of G-T. A 13; approximate repeat occupies Asp-56–Thr-57. 3 tandem repeats follow at residues Gly-58–Thr-59, Gly-60–Thr-61, and Gly-62–Thr-63. The stretch at Arg-64 to Asn-65 is one 17; approximate repeat. Residues Arg-64–Tyr-83 show a composition bias toward low complexity. Copy 18 of the repeat occupies Gly-66–Thr-67. The 19; approximate repeat unit spans residues Asn-68–Ser-69. Residues Gly-70 to Thr-71 form repeat 20. The 21; approximate repeat unit spans residues Asn-72–Ser-73. Copy 22 of the repeat occupies Gly-74–Thr-75. The 23; approximate repeat unit spans residues Arg-76–Thr-77. Repeat 24 spans residues Gly-78–Thr-79. Over residues Arg-84–Val-96 the composition is skewed to gly residues.

In terms of assembly, forms a heterodimer with timeless (TIM); the complex then translocates into the nucleus. Post-translationally, phosphorylated with a circadian rhythmicity, probably by the double-time protein (dbt). Phosphorylation could be implicated in the stability of per monomer and in the formation of heterodimer per-tim.

It is found in the nucleus. The protein localises to the cytoplasm. The protein resides in the perinuclear region. Essential for biological clock functions. Determines the period length of circadian and ultradian rhythms; an increase in PER dosage leads to shortened circadian rhythms and a decrease leads to lengthened circadian rhythms. Essential for the circadian rhythmicity of locomotor activity, eclosion behavior, and for the rhythmic component of the male courtship song that originates in the thoracic nervous system. The biological cycle depends on the rhythmic formation and nuclear localization of the TIM-PER complex. Light induces the degradation of TIM, which promotes elimination of PER. Nuclear activity of the heterodimer coordinatively regulates PER and TIM transcription through a negative feedback loop. Behaves as a negative element in circadian transcriptional loop. Does not appear to bind DNA, suggesting indirect transcriptional inhibition. The protein is Period circadian protein (per) of Drosophila erecta (Fruit fly).